Consider the following 178-residue polypeptide: Large ribosomal subunit protein uL6 (178 aa).

The protein belongs to the universal ribosomal protein uL6 family. In terms of assembly, part of the 50S ribosomal subunit.

In terms of biological role, this protein binds to the 23S rRNA, and is important in its secondary structure. It is located near the subunit interface in the base of the L7/L12 stalk, and near the tRNA binding site of the peptidyltransferase center. The chain is Large ribosomal subunit protein uL6 from Helicobacter pylori (strain P12).